The following is a 228-amino-acid chain: Vesicle transport protein SEC20 (228 aa).

At 1-199 (MAAPQDVHVR…LITKYNRREL (199 aa)) the chain is on the cytoplasmic side. Residues 37 to 90 (LSALTELNTKVKEKFQQLRHRIQDLEQLAKEQDKESEKQLLLQEVENHKKQMLS) are a coiled coil. A helical; Anchor for type IV membrane protein transmembrane segment spans residues 200–220 (TDKLLIFLALALFLATVLYIV). At 221 to 228 (KKRLFPFL) the chain is on the lumenal side.

This sequence belongs to the SEC20 family. In terms of assembly, component of a SNARE complex consisting of STX18, USE1L, BNIP1/SEC20L and SEC22B. Interacts directly with STX18, RINT1/TIP20L and NAPA. Interacts with ZW10 through RINT1. Interacts with BCL2. Interacts with RNF186. Interacts with RNF185. Interacts with SQSTM1; increased by 'Lys-63'-linked polyubiquitination of BNIP1. As to quaternary structure, (Microbial infection) Interacts with adenovirus E1B 19K protein; plays a role in the suppression of cell apoptosis by the viral protein. Post-translationally, polyubiquitinated. 'Lys-63'-linked polyubiquitination by RNF185 increases the interaction with the autophagy receptor SQSTM1. Undergoes 'Lys-29'- and 'Lys-63'-linked polyubiquitination by RNF186 that may regulate BNIP1 localization to the mitochondrion. In terms of tissue distribution, isoform 1 is highly expressed in heart, brain, liver skeletal muscle and pancreas. Isoform 3 is moderately expressed in placenta, lung and kidney. Isoform 4 is highly expressed in testis and small intestine.

The protein resides in the endoplasmic reticulum membrane. It is found in the mitochondrion membrane. Functionally, as part of a SNARE complex may be involved in endoplasmic reticulum membranes fusion and be required for the maintenance of endoplasmic reticulum organization. Also plays a role in apoptosis. It is for instance required for endoplasmic reticulum stress-induced apoptosis. As a substrate of RNF185 interacting with SQSTM1, might also be involved in mitochondrial autophagy. This chain is Vesicle transport protein SEC20 (BNIP1), found in Homo sapiens (Human).